The sequence spans 281 residues: 4-hydroxy-3-methylbut-2-enyl diphosphate reductase (281 aa).

Position 12 (cysteine 12) interacts with [4Fe-4S] cluster. Histidine 41 and histidine 74 together coordinate (2E)-4-hydroxy-3-methylbut-2-enyl diphosphate. Dimethylallyl diphosphate contacts are provided by histidine 41 and histidine 74. Isopentenyl diphosphate contacts are provided by histidine 41 and histidine 74. Cysteine 96 is a [4Fe-4S] cluster binding site. Residue histidine 124 participates in (2E)-4-hydroxy-3-methylbut-2-enyl diphosphate binding. Residue histidine 124 participates in dimethylallyl diphosphate binding. Residue histidine 124 coordinates isopentenyl diphosphate. Glutamate 126 serves as the catalytic Proton donor. A (2E)-4-hydroxy-3-methylbut-2-enyl diphosphate-binding site is contributed by threonine 164. Cysteine 193 is a binding site for [4Fe-4S] cluster. The (2E)-4-hydroxy-3-methylbut-2-enyl diphosphate site is built by serine 221, asparagine 223, and serine 265. Dimethylallyl diphosphate-binding residues include serine 221, asparagine 223, and serine 265. Isopentenyl diphosphate contacts are provided by serine 221, asparagine 223, and serine 265.

Belongs to the IspH family. It depends on [4Fe-4S] cluster as a cofactor.

The enzyme catalyses isopentenyl diphosphate + 2 oxidized [2Fe-2S]-[ferredoxin] + H2O = (2E)-4-hydroxy-3-methylbut-2-enyl diphosphate + 2 reduced [2Fe-2S]-[ferredoxin] + 2 H(+). It catalyses the reaction dimethylallyl diphosphate + 2 oxidized [2Fe-2S]-[ferredoxin] + H2O = (2E)-4-hydroxy-3-methylbut-2-enyl diphosphate + 2 reduced [2Fe-2S]-[ferredoxin] + 2 H(+). Its pathway is isoprenoid biosynthesis; dimethylallyl diphosphate biosynthesis; dimethylallyl diphosphate from (2E)-4-hydroxy-3-methylbutenyl diphosphate: step 1/1. The protein operates within isoprenoid biosynthesis; isopentenyl diphosphate biosynthesis via DXP pathway; isopentenyl diphosphate from 1-deoxy-D-xylulose 5-phosphate: step 6/6. Functionally, catalyzes the conversion of 1-hydroxy-2-methyl-2-(E)-butenyl 4-diphosphate (HMBPP) into a mixture of isopentenyl diphosphate (IPP) and dimethylallyl diphosphate (DMAPP). Acts in the terminal step of the DOXP/MEP pathway for isoprenoid precursor biosynthesis. In Oleidesulfovibrio alaskensis (strain ATCC BAA-1058 / DSM 17464 / G20) (Desulfovibrio alaskensis), this protein is 4-hydroxy-3-methylbut-2-enyl diphosphate reductase.